The chain runs to 332 residues: Large ribosomal subunit protein mL44 (332 aa).

The N-terminal 30 residues, 1 to 30 (MASGLVRLLQQGPRCLLAPVAPKLVPPVRG), are a transit peptide targeting the mitochondrion. In terms of domain architecture, RNase III spans 86–228 (DLLKTAFVNS…LITQMTGKEL (143 aa)). In terms of domain architecture, DRBM spans 236 to 306 (NPMGLLVEEL…ARVALRKLYG (71 aa)).

The protein belongs to the ribonuclease III family. Mitochondrion-specific ribosomal protein mL44 subfamily. As to quaternary structure, component of the mitochondrial ribosome large subunit (39S) which comprises a 16S rRNA and about 50 distinct proteins.

It localises to the mitochondrion. In terms of biological role, component of the 39S subunit of mitochondrial ribosome. May have a function in the assembly/stability of nascent mitochondrial polypeptides exiting the ribosome. This chain is Large ribosomal subunit protein mL44 (MRPL44), found in Pongo abelii (Sumatran orangutan).